The primary structure comprises 426 residues: Glutamyl-tRNA reductase (426 aa).

Residues 49–52, Ser109, 114–116, and Gln120 each bind substrate; these read TCNR and EGQ. The Nucleophile role is filled by Cys50. 189-194 is an NADP(+) binding site; sequence GAGKMS.

Belongs to the glutamyl-tRNA reductase family. Homodimer.

It catalyses the reaction (S)-4-amino-5-oxopentanoate + tRNA(Glu) + NADP(+) = L-glutamyl-tRNA(Glu) + NADPH + H(+). It participates in porphyrin-containing compound metabolism; protoporphyrin-IX biosynthesis; 5-aminolevulinate from L-glutamyl-tRNA(Glu): step 1/2. The protein operates within porphyrin-containing compound metabolism; chlorophyll biosynthesis. Its function is as follows. Catalyzes the NADPH-dependent reduction of glutamyl-tRNA(Glu) to glutamate 1-semialdehyde (GSA). This chain is Glutamyl-tRNA reductase, found in Thermosynechococcus vestitus (strain NIES-2133 / IAM M-273 / BP-1).